The following is a 199-amino-acid chain: LexA repressor (199 aa).

A DNA-binding region (H-T-H motif) is located at residues 28–47 (IRDIAKHFKLTPRGAHIHVI). Active-site for autocatalytic cleavage activity residues include Ser120 and Lys157.

The protein belongs to the peptidase S24 family. In terms of assembly, homodimer.

The catalysed reaction is Hydrolysis of Ala-|-Gly bond in repressor LexA.. Represses a number of genes involved in the response to DNA damage (SOS response), including recA and lexA. In the presence of single-stranded DNA, RecA interacts with LexA causing an autocatalytic cleavage which disrupts the DNA-binding part of LexA, leading to derepression of the SOS regulon and eventually DNA repair. This chain is LexA repressor, found in Thermosipho melanesiensis (strain DSM 12029 / CIP 104789 / BI429).